The following is a 43-amino-acid chain: Protein PsbN (43 aa).

The chain crosses the membrane as a helical span at residues 7–29 (LSIALAAVCIGVTGYSIYLSFGP).

It belongs to the PsbN family.

The protein localises to the cellular thylakoid membrane. Functionally, may play a role in photosystem I and II biogenesis. This is Protein PsbN from Thermosynechococcus vestitus (strain NIES-2133 / IAM M-273 / BP-1).